The chain runs to 598 residues: Elongation factor 4 (598 aa).

The region spanning 2–184 is the tr-type G domain; it reads NRIRNFSIIA…TIVAKLPPPK (183 aa). GTP is bound by residues 14 to 19 and 131 to 134; these read DHGKST and NKID.

It belongs to the TRAFAC class translation factor GTPase superfamily. Classic translation factor GTPase family. LepA subfamily.

Its subcellular location is the cell inner membrane. It carries out the reaction GTP + H2O = GDP + phosphate + H(+). Functionally, required for accurate and efficient protein synthesis under certain stress conditions. May act as a fidelity factor of the translation reaction, by catalyzing a one-codon backward translocation of tRNAs on improperly translocated ribosomes. Back-translocation proceeds from a post-translocation (POST) complex to a pre-translocation (PRE) complex, thus giving elongation factor G a second chance to translocate the tRNAs correctly. Binds to ribosomes in a GTP-dependent manner. The protein is Elongation factor 4 of Desulfosudis oleivorans (strain DSM 6200 / JCM 39069 / Hxd3) (Desulfococcus oleovorans).